The sequence spans 683 residues: Methionine--tRNA ligase (683 aa).

The 'HIGH' region motif lies at 15-25 (PYANGPIHLGH). Zn(2+) is bound by residues Cys-146, Cys-149, Cys-159, and Cys-162. The 'KMSKS' region motif lies at 332-336 (KMSKS). ATP is bound at residue Lys-335. Residues 581 to 683 (DFFKVDLRVA…AGAKAGQRVK (103 aa)) enclose the tRNA-binding domain.

It belongs to the class-I aminoacyl-tRNA synthetase family. MetG type 1 subfamily. Homodimer. The cofactor is Zn(2+).

Its subcellular location is the cytoplasm. The enzyme catalyses tRNA(Met) + L-methionine + ATP = L-methionyl-tRNA(Met) + AMP + diphosphate. In terms of biological role, is required not only for elongation of protein synthesis but also for the initiation of all mRNA translation through initiator tRNA(fMet) aminoacylation. This chain is Methionine--tRNA ligase, found in Histophilus somni (strain 129Pt) (Haemophilus somnus).